A 400-amino-acid polypeptide reads, in one-letter code: Large envelope protein (400 aa).

An N-acetylmethionine modification is found at M1. A lipid anchor (N-myristoyl glycine; by host) is attached at G2. Positions 2–119 are pre-S1; that stretch reads GAPLSTTRRG…PPLRDTHPQA (118 aa). Residues 2 to 174 are pre-S; it reads GAPLSTTRRG…FLKTGGPATN (173 aa). Residues 2-181 lie on the Virion surface; in external conformation side of the membrane; that stretch reads GAPLSTTRRG…ATNMDNITSG (180 aa). The Intravirion; in internal conformation portion of the chain corresponds to 2-253; sequence GAPLSTTRRG…PGYRWMCLRR (252 aa). P4 is a glycosylation site (N-linked (GlcNAc...) asparagine). The disordered stretch occupies residues 84 to 114; it reads VLTTLPADPPPASTNRRSGRKPTPVSPPLRD. Residues 120 to 174 are pre-S2; that stretch reads MQWNSTQFHQALLDPRVRALYFPAGGSSSETQNPAPTIASLTSSIFLKTGGPATN. Residues 182 to 202 form a helical membrane-spanning segment; that stretch reads LLGPLLVLQAVCFLLTKILTI. Topologically, residues 203-253 are intravirion; in external conformation; the sequence is PQSLDSWWTSLNFLGGTPGCPGQNSQSPTSNHLPTSCPPTCPGYRWMCLRR. The chain crosses the membrane as a helical span at residues 254 to 274; sequence FIIFLFILLLCLIFLLVLVDY. At 275 to 348 the chain is on the virion surface side; the sequence is QGMLPVCPPL…WASARFSWLS (74 aa). N320 carries N-linked (GlcNAc...) asparagine; by host glycosylation. The helical transmembrane segment at 349-369 threads the bilayer; that stretch reads LLVQFVQWCVGLSPTVWLLVI. Topologically, residues 370 to 375 are intravirion; the sequence is WMIWYW. Residues 376–398 form a helical membrane-spanning segment; it reads GPNLCSILSPFIPLLPIFCYLWV. Over 399 to 400 the chain is Virion surface; that stretch reads SI.

Belongs to the orthohepadnavirus major surface antigen family. In terms of assembly, in its internal form (Li-HBsAg), interacts with the capsid protein and with the isoform S. Interacts with host chaperone CANX. Associates with host chaperone CANX through its pre-S2 N glycan; this association may be essential for isoform M proper secretion. As to quaternary structure, interacts with isoform L. Interacts with the antigens of satellite virus HDV (HDVAgs); this interaction is required for encapsidation of HDV genomic RNA. Isoform M is N-terminally acetylated by host at a ratio of 90%, and N-glycosylated by host at the pre-S2 region. Post-translationally, myristoylated.

It is found in the virion membrane. Functionally, the large envelope protein exists in two topological conformations, one which is termed 'external' or Le-HBsAg and the other 'internal' or Li-HBsAg. In its external conformation the protein attaches the virus to cell receptors and thereby initiating infection. This interaction determines the species specificity and liver tropism. This attachment induces virion internalization predominantly through caveolin-mediated endocytosis. The large envelope protein also assures fusion between virion membrane and endosomal membrane. In its internal conformation the protein plays a role in virion morphogenesis and mediates the contact with the nucleocapsid like a matrix protein. The middle envelope protein plays an important role in the budding of the virion. It is involved in the induction of budding in a nucleocapsid independent way. In this process the majority of envelope proteins bud to form subviral lipoprotein particles of 22 nm of diameter that do not contain a nucleocapsid. The chain is Large envelope protein from Homo sapiens (Human).